Here is a 98-residue protein sequence, read N- to C-terminus: MTTVGVSLFRRSPEKITMKIATFLGLSFLLIASYFLICEAQHPGFQELLILEENMRDPENSKERSCAKPRENCNRMNILCCRGECVCPTFGDCFCYGD.

Residues 1–40 (MTTVGVSLFRRSPEKITMKIATFLGLSFLLIASYFLICEA) form the signal peptide. A propeptide spanning residues 41-64 (QHPGFQELLILEENMRDPENSKER) is cleaved from the precursor. 3 cysteine pairs are disulfide-bonded: C66–C81, C73–C85, and C80–C95.

Belongs to the hainantoxin family. 17 subfamily. Expressed by the venom gland.

Its subcellular location is the secreted. In terms of biological role, inhibits with low potency Kv1.2/KCNA2 and Kv1.3/KCNA3 voltage-gated potassium channels. This chain is Hainantoxin-XVII.3, found in Cyriopagopus hainanus (Chinese bird spider).